A 332-amino-acid polypeptide reads, in one-letter code: Glycerol-3-phosphate dehydrogenase [NAD(P)+] (332 aa).

Positions 11, 12, 32, 33, and 106 each coordinate NADPH. Positions 106 and 136 each coordinate sn-glycerol 3-phosphate. NADPH is bound at residue A140. Residues K191, D244, S254, R255, and N256 each coordinate sn-glycerol 3-phosphate. Catalysis depends on K191, which acts as the Proton acceptor. Residue R255 coordinates NADPH. V280 and E282 together coordinate NADPH.

Belongs to the NAD-dependent glycerol-3-phosphate dehydrogenase family.

It localises to the cytoplasm. It catalyses the reaction sn-glycerol 3-phosphate + NAD(+) = dihydroxyacetone phosphate + NADH + H(+). The catalysed reaction is sn-glycerol 3-phosphate + NADP(+) = dihydroxyacetone phosphate + NADPH + H(+). Its pathway is membrane lipid metabolism; glycerophospholipid metabolism. Its function is as follows. Catalyzes the reduction of the glycolytic intermediate dihydroxyacetone phosphate (DHAP) to sn-glycerol 3-phosphate (G3P), the key precursor for phospholipid synthesis. This chain is Glycerol-3-phosphate dehydrogenase [NAD(P)+], found in Corynebacterium urealyticum (strain ATCC 43042 / DSM 7109).